Reading from the N-terminus, the 161-residue chain is MAELYIDADACPVKAEAERVAVRHGARMYLVSNGGIRPPAHPLVESVFVPEGPDAADKWIADRAGTGDVVVTSDIPLAAKAVAAGALVVKPNGETLTTANIGNALATRDLMADLRSADPFRQGGGRPFSRADRSRFLDALERAMRKAAEAARDAGQDEAGT.

Belongs to the UPF0178 family.

This chain is UPF0178 protein Rsph17025_3122, found in Cereibacter sphaeroides (strain ATCC 17025 / ATH 2.4.3) (Rhodobacter sphaeroides).